The chain runs to 302 residues: Gap junction delta-2 protein (302 aa).

Residues 1-19 (MGEWTILERLLEAAVQQHS) lie on the Cytoplasmic side of the membrane. A helical membrane pass occupies residues 20–42 (TMIGRILLTVVVIFRILVVAIVG). Residues 43–75 (ETVYDDEQTMFVCNTLQPGCNQACYDKAFPISH) lie on the Extracellular side of the membrane. Residues 76-98 (IRYWVFQIIMVCTPSLCFITYSV) form a helical membrane-spanning segment. At 99 to 177 (HQSSKQRERQ…KIRRQEGISR (79 aa)) the chain is on the cytoplasmic side. A helical transmembrane segment spans residues 178–200 (FYIIQVVFRNALEIGFLMGQYFL). Topologically, residues 201–232 (YGFKVPSMYECNRYPCVKMVECYVSRPTEKTV) are extracellular. A helical transmembrane segment spans residues 233–255 (FLVFMFAVSGLCVILNLAELNHL). Topologically, residues 256–302 (GWRKIKTAVRGAQERRKSIYEIRNKDSPHRIGVPNFGRTQSSDSAYV) are cytoplasmic.

Belongs to the connexin family. Delta-type subfamily. In terms of assembly, a connexon is composed of a hexamer of connexins. Retinal specific.

It localises to the cell membrane. Its subcellular location is the cell junction. It is found in the gap junction. Its function is as follows. One gap junction consists of a cluster of closely packed pairs of transmembrane channels, the connexons, through which materials of low MW diffuse from one cell to a neighboring cell. This is Gap junction delta-2 protein from Leucoraja erinaceus (Little skate).